A 398-amino-acid chain; its full sequence is MASADKGLEEIQEGQIESNYDETVDSFDTMNLKPELLRGVYAYGFERPSAIQQRAIMPVIKGHDVIAQAQSGTGKTATFSISVLQKLDPNVKQCQALILAPTRELAQQIQKVVVAIGDFMNVECHACIGGTSVRDDMKALQDGPQVVVGTPGRVHDMIQRRFLKTDSMKMFVLDEADEMLSRGFTEQIYDIFQLLPQSTQVVLLSATMPQDVLEVTTKFMRDPVRILVKKAELTLEGIKQFYIAVEKEDWKLDTLSDLYETVTITQAVIFCNTRRKVDWLTDKLTARDFTVSAMHGDMDQGQRDLIMKEFRSGSSRVLIATDLLARGIDVQQVSLVINYDLPANRENYIHRIGRGGRFGRKGVAINFVTADDVRMMREIEQFYSTQIEEMPMNVADLI.

The short motif at 25–53 (DSFDTMNLKPELLRGVYAYGFERPSAIQQ) is the Q motif element. The Helicase ATP-binding domain maps to 56–226 (IMPVIKGHDV…TKFMRDPVRI (171 aa)). 69-76 (AQSGTGKT) is a binding site for ATP. The DEAD box motif lies at 174-177 (DEAD). A Helicase C-terminal domain is found at 237–398 (GIKQFYIAVE…EMPMNVADLI (162 aa)).

This sequence belongs to the DEAD box helicase family. eIF4A subfamily. Component of the eIF4F complex, which composition varies with external and internal environmental conditions. It is composed of at least eIF4A, eIF4E and eIF4G.

It is found in the cytoplasm. The catalysed reaction is ATP + H2O = ADP + phosphate + H(+). ATP-dependent RNA helicase which is a subunit of the eIF4F complex involved in cap recognition and is required for mRNA binding to ribosome. In the current model of translation initiation, eIF4A unwinds RNA secondary structures in the 5'-UTR of mRNAs which is necessary to allow efficient binding of the small ribosomal subunit, and subsequent scanning for the initiator codon. The chain is ATP-dependent RNA helicase eIF4A (tif1) from Botryotinia fuckeliana (strain B05.10) (Noble rot fungus).